Here is a 1203-residue protein sequence, read N- to C-terminus: Potassium/sodium hyperpolarization-activated cyclic nucleotide-gated channel 4 (1203 aa).

Residues 1–182 are disordered; sequence MDKLPPSMRK…QPASASCEQP (182 aa). Residues 1-263 are Cytoplasmic-facing; sequence MDKLPPSMRK…IIHPYSDFRF (263 aa). Residues 26 to 36 show a composition bias toward acidic residues; sequence MDEEEDAEEEG. Positions 105 to 117 are enriched in gly residues; that stretch reads SRGGGSGGTGSGS. Residues 121-133 show a composition bias toward basic and acidic residues; it reads HLHDSAEERRLIA. A Phosphoserine modification is found at serine 138. Pro residues predominate over residues 163–174; it reads ASPPPPQQPPQP. An involved in subunit assembly region spans residues 209-260; it reads GQAGFMQRQFGAMLQPGVNKFSLRMFGSQKAVEREQERVKSAGFWIIHPYSD. The helical transmembrane segment at 264-286 threads the bilayer; the sequence is YWDLTMLLLMVGNLIIIPVGITF. The Extracellular portion of the chain corresponds to 287 to 293; that stretch reads FKDENTT. A helical membrane pass occupies residues 294–314; the sequence is PWIVFNVVSDTFFLIDLVLNF. Topologically, residues 315-336 are cytoplasmic; that stretch reads RTGIVVEDNTEIILDPQRIKMK. A helical transmembrane segment spans residues 337–359; that stretch reads YLKSWFMVDFISSIPVDYIFLIV. The Extracellular portion of the chain corresponds to 360–378; it reads ETRIDSEVYKTARALRIVR. Residues 379 to 399 form a helical; Voltage-sensor membrane-spanning segment; sequence FTKILSLLRLLRLSRLIRYIH. At 400–413 the chain is on the cytoplasmic side; that stretch reads QWEEIFHMTYDLAS. Residues 414-436 traverse the membrane as a helical segment; it reads AVVRIVNLIGMMLLLCHWDGCLQ. Over 437–464 the chain is Extracellular; sequence FLVPMLQDFPDDCWVSINNMVNNSWGKQ. N-linked (GlcNAc...) asparagine glycosylation is present at asparagine 458. The segment at residues 465–486 is an intramembrane region (pore-forming); sequence YSYALFKAMSHMLCIGYGRQAP. At 487–491 the chain is on the extracellular side; it reads VGMSD. The chain crosses the membrane as a helical span at residues 492–517; it reads VWLTMLSMIVGATCYAMFIGHATALI. Residues 518 to 1203 are Cytoplasmic-facing; it reads QSLDSSRRQY…PVRSKLPSNL (686 aa). Positions 559, 562, 564, and 566 each coordinate 3',5'-cyclic GMP. Glycine 659, glutamate 660, cysteine 662, arginine 669, threonine 670, valine 673, and arginine 710 together coordinate 3',5'-cyclic AMP. Disordered stretches follow at residues 836–856, 870–897, and 918–1203; these read ALGS…SSSS, GLSP…TPSA, and LSSS…PSNL. 2 stretches are compositionally biased toward low complexity: residues 918 to 941 and 966 to 986; these read LSSS…AAQP and RSPS…SLGL. The span at 995–1004 shows a compositional bias: pro residues; that stretch reads ETPPRQPEPP. The span at 1005 to 1028 shows a compositional bias: low complexity; sequence SLVAGASGGASPVGFTPRGGLSPP. The span at 1029–1042 shows a compositional bias: pro residues; that stretch reads GHSPGPPRTFPSAP. The segment covering 1045–1056 has biased composition (low complexity); the sequence is ASGSHGSLLLPP. 2 positions are modified to phosphoserine: serine 1105 and serine 1108. A compositionally biased stretch (gly residues) spans 1122–1137; the sequence is AGGGSGGSGSSGGLGP.

This sequence belongs to the potassium channel HCN family. In terms of assembly, homotetramer. The channel assemble into homotetramers or heteromeric complexes that contains of four pore-forming subunits. Interacts with PEX5L with a 4:4 HCN4:PEX5L stoichiometry; reduces the effects of cAMP on the voltage-dependence and rate of activation. Interacts with IRAG1; regulates HCN4 channel activity. Interacts with IRAG2; regulates HCN4 channel activity. S-palmitoylated. Highly expressed in thalamus, testis and in heart, both in ventricle and atrium. Detected at much lower levels in amygdala, substantia nigra, cerebellum and hippocampus.

It localises to the cell membrane. The enzyme catalyses K(+)(in) = K(+)(out). The catalysed reaction is Na(+)(in) = Na(+)(out). Its activity is regulated as follows. Activated by cAMP and to a lesser extent by cGMP and cCMP. cAMP binding causes a conformation change that leads to the assembly of an active tetramer and channel opening. Binding of cAMP removes a tonic inhibition conferred by cyclic nucleotide-binding domain (CNBD) on channel opening. Cyclic dinucleotides can modulate HCN4 channel; cyclic dinucleotides acting as potent antagonists of cAMP. Inhibited by extracellular Cs(+) ions. Auxiliary subunits can also regulate HCN4 channel. IRAG1 causes a gain-of-function by shifting HCN4 activation to more depolarized membrane potentials in the absence of cAMP. In contrast, IRAG2 causes a loss-of-function by inhibiting cAMP-dependent potentiation of HCN4 activation. Its function is as follows. Hyperpolarization-activated ion channel that are permeable to Na(+) and K(+) ions with very slow activation and inactivation. Exhibits higher selectivity for K(+) over Na(+) ions. Contributes to the native pacemaker currents in heart (If) that regulate the rhythm of heart beat. Contributes to the native pacemaker currents in neurons (Ih). May mediate responses to sour stimuli. The protein is Potassium/sodium hyperpolarization-activated cyclic nucleotide-gated channel 4 of Homo sapiens (Human).